We begin with the raw amino-acid sequence, 147 residues long: Large ribosomal subunit protein uL13 (147 aa).

Belongs to the universal ribosomal protein uL13 family. As to quaternary structure, part of the 50S ribosomal subunit.

This protein is one of the early assembly proteins of the 50S ribosomal subunit, although it is not seen to bind rRNA by itself. It is important during the early stages of 50S assembly. The protein is Large ribosomal subunit protein uL13 of Deinococcus geothermalis (strain DSM 11300 / CIP 105573 / AG-3a).